We begin with the raw amino-acid sequence, 444 residues long: Nuclear distribution protein nudF (444 aa).

Positions 9–41 (QAEALHKAMLAYLSVINAPQTAETLREELHFDE) constitute a LisH domain. Positions 60–88 (TGIARLQRRINDLEAEVRSLQAELEASPS) form a coiled coil. Positions 83 to 107 (LEASPSAARAKNQDPTNWLPKPSST) are disordered. WD repeat units follow at residues 112 to 153 (SHRD…RTLK), 155 to 195 (HIRG…ANIR), 199 to 239 (GHDH…CVKV), 243 to 282 (ATESWIRDVSPSFDGKWLVSGGRDQAITVWEVSSAEPKAA), 285 to 345 (GHEN…IKTL), 347 to 386 (GHDNWVRGLVFHPGGKYLFSVSDDKTIRCWDLSQEGRLVK), and 391 to 437 (AHEH…GCAD).

It belongs to the WD repeat LIS1/nudF family. In terms of assembly, interacts with dynein. Self-associates. Interacts with bnfA, nudC and nudE.

The protein localises to the cytoplasm. The protein resides in the cytoskeleton. It localises to the spindle pole. Positively regulates the activity of the minus-end directed microtubule motor protein dynein. May enhance dynein-mediated microtubule sliding by targeting dynein to the microtubule plus end. Required for nuclear migration during vegetative growth as well as development. Required for retrograde early endosome (EE) transport from the hyphal tip. Required for localization of dynein to the mitotic spindle poles. Recruits additional proteins to the dynein complex at SPBs. This chain is Nuclear distribution protein nudF, found in Emericella nidulans (strain FGSC A4 / ATCC 38163 / CBS 112.46 / NRRL 194 / M139) (Aspergillus nidulans).